Consider the following 350-residue polypeptide: Small ribosomal subunit biogenesis GTPase RsgA (350 aa).

Residues 1–17 show a composition bias toward polar residues; the sequence is MSKNKLSKGQQRRVQAN. The segment at 1–35 is disordered; it reads MSKNKLSKGQQRRVQANHQRRLRTDRKPELDDSQL. The CP-type G domain maps to 103–273; the sequence is TSVLTRPDLY…VIDSPGVREF (171 aa). GTP is bound by residues 159 to 162 and 213 to 221; these read NKID and GQSGVGKSS. Zn(2+) contacts are provided by Cys-297, Cys-302, His-304, and Cys-310.

This sequence belongs to the TRAFAC class YlqF/YawG GTPase family. RsgA subfamily. As to quaternary structure, monomer. Associates with 30S ribosomal subunit, binds 16S rRNA. The cofactor is Zn(2+).

The protein resides in the cytoplasm. In terms of biological role, one of several proteins that assist in the late maturation steps of the functional core of the 30S ribosomal subunit. Helps release RbfA from mature subunits. May play a role in the assembly of ribosomal proteins into the subunit. Circularly permuted GTPase that catalyzes slow GTP hydrolysis, GTPase activity is stimulated by the 30S ribosomal subunit. This chain is Small ribosomal subunit biogenesis GTPase RsgA, found in Yersinia enterocolitica serotype O:8 / biotype 1B (strain NCTC 13174 / 8081).